We begin with the raw amino-acid sequence, 134 residues long: Profilin-5 (134 aa).

It belongs to the profilin family. As to quaternary structure, occurs in many kinds of cells as a complex with monomeric actin in a 1:1 ratio. Specifically expressed in mature pollen grains. Expressed in germinating pollen grains. Expressed in growing pollen tubes (at protein level).

It localises to the cytoplasm. The protein resides in the cytoskeleton. In terms of biological role, binds to actin monomers and regulates the organization of the actin cytoskeleton. At high concentrations, profilin prevents the polymerization of actin, whereas it enhances it at low concentrations. At low concentrations, associates with the poly-proline motif of formins to enhance actin filament elongation rate. Acts redundantly with PRF4 to regulate apical actin polymerization at the tip of pollen tube and control polarized pollen tube growth. Functions probably by favoring formin-mediated actin polymerization at pollen tube tips. The sequence is that of Profilin-5 from Arabidopsis thaliana (Mouse-ear cress).